Consider the following 169-residue polypeptide: Peptide methionine sulfoxide reductase MsrA (169 aa).

Residue Cys-10 is part of the active site.

The protein belongs to the MsrA Met sulfoxide reductase family.

The enzyme catalyses L-methionyl-[protein] + [thioredoxin]-disulfide + H2O = L-methionyl-(S)-S-oxide-[protein] + [thioredoxin]-dithiol. It carries out the reaction [thioredoxin]-disulfide + L-methionine + H2O = L-methionine (S)-S-oxide + [thioredoxin]-dithiol. Has an important function as a repair enzyme for proteins that have been inactivated by oxidation. Catalyzes the reversible oxidation-reduction of methionine sulfoxide in proteins to methionine. The chain is Peptide methionine sulfoxide reductase MsrA from Streptococcus equi subsp. equi (strain 4047).